The following is a 902-amino-acid chain: Probable polyribonucleotide nucleotidyltransferase 1, chloroplastic (902 aa).

A chloroplast-targeting transit peptide spans 1–66 (MLATPGALHH…RRRAAGARVR (66 aa)). Positions 44-53 (VAASASTSRR) are enriched in low complexity. A disordered region spans residues 44 to 93 (VAASASTSRRGGARRRAAGARVRASVGEEAPPVVTEEASTSGGPTKFSTK). Residues 80–91 (EASTSGGPTKFS) are compositionally biased toward polar residues. A KH domain is found at 693–753 (PLIHVMKVKP…SSLEKSKAII (61 aa)). The 70-residue stretch at 763 to 832 (GEIYRNCEIK…DKGQLRLSSR (70 aa)) folds into the S1 motif domain. Positions 833 to 902 (ALLPDANQES…ASQGSEMGTE (70 aa)) are disordered. Over residues 839–850 (NQESSSKQQAGG) the composition is skewed to polar residues. Basic and acidic residues predominate over residues 852–862 (TREKAPQKDNL). Low complexity predominate over residues 877–888 (EASTAENNATAS).

Belongs to the polyribonucleotide nucleotidyltransferase family.

Its subcellular location is the plastid. The protein resides in the chloroplast. It carries out the reaction RNA(n+1) + phosphate = RNA(n) + a ribonucleoside 5'-diphosphate. Functionally, involved in the metabolism of all major classes of plastid RNAs. Required for efficient 3'-end processing of mRNAs and 3'-end maturation of rRNA transcripts, but is not sufficient to mediate their degradation. Mediates tRNA degradation. May function as a poly(A) mRNA 3'-5' degrading phosphorylase. This is Probable polyribonucleotide nucleotidyltransferase 1, chloroplastic (PNP1) from Oryza sativa subsp. japonica (Rice).